We begin with the raw amino-acid sequence, 282 residues long: Transcription factor HES-1 (282 aa).

The interval 1-44 (MPADIMEKNSSSPVAATPASVNTTPDKPKTASEHRKSSKPIMEK) is disordered. The segment covering 10–21 (SSSPVAATPASV) has biased composition (low complexity). Residues 26-35 (DKPKTASEHR) are compositionally biased toward basic and acidic residues. A bHLH domain is found at 34-91 (HRKSSKPIMEKRRRARINESLSQLKTLILDALKKDSSRHSKLEKADILEMTVKHLRNL). Residues 110-143 (YRAGFSECMNEVTRFLSTCEGVNTEVRTRLLGHL) enclose the Orange domain. 2 disordered regions span residues 158 to 204 (QAHP…GSAP) and 256 to 282 (TSVGPNAVSPSSGSSLTSDSMWRPWRN). 2 stretches are compositionally biased toward pro residues: residues 164–174 (QAPPPPPPSGP) and 182–202 (FAPPPPPLVPIPGGAAPPPGS). Residues 264 to 275 (SPSSGSSLTSDS) show a composition bias toward low complexity. A WRPW motif motif is present at residues 277-280 (WRPW).

In terms of assembly, interacts with SIRT1. Transcription repression requires formation of a complex with a corepressor protein of the Groucho/TLE family. Interacts (via WPRW motif) with TLE1, and more weakly with TLE2. Interacts with HES6. Interacts with an FA complex, composed of FANCA, FANCF, FANCG and FANCL, but not of FANCC, nor FANCE. In terms of tissue distribution, expressed at high levels in undifferentiated neural precursor cells, but the level of expression decreases as neural differentiation proceeds.

It localises to the nucleus. Transcriptional repressor of genes that require a bHLH protein for their transcription. May act as a negative regulator of myogenesis by inhibiting the functions of MYOD1 and ASH1. Binds DNA on N-box motifs: 5'-CACNAG-3' with high affinity and on E-box motifs: 5'-CANNTG-3' with low affinity. May play a role in a functional FA core complex response to DNA cross-link damage, being required for the stability and nuclear localization of FA core complex proteins, as well as for FANCD2 monoubiquitination in response to DNA damage. The polypeptide is Transcription factor HES-1 (Hes1) (Mus musculus (Mouse)).